A 630-amino-acid polypeptide reads, in one-letter code: Sodium-dependent serotonin transporter (630 aa).

Polar residues-rich tracts occupy residues 1 to 11 (METTPLNSQKV) and 42 to 55 (QISN…STSA). Residues 1–63 (METTPLNSQK…SAGDEAPHST (63 aa)) form a disordered region. Residues 1-87 (METTPLNSQK…ERETWGKKMD (87 aa)) lie on the Cytoplasmic side of the membrane. The residue at position 47 (tyrosine 47) is a Phosphotyrosine. The chain crosses the membrane as a helical span at residues 88 to 112 (FLLSVIGYAVDLGNIWRFPYICYQN). Residues glycine 94, alanine 96, valine 97, aspartate 98, and asparagine 101 each contribute to the Na(+) site. Serotonin is bound at residue aspartate 98. Over 113–115 (GGG) the chain is Extracellular. A helical transmembrane segment spans residues 116 to 135 (AFLLPYTIMAIFGGIPLFYM). Residues 136-160 (ELALGQYHRNGCISIWKKICPIFKG) are Cytoplasmic-facing. Phosphotyrosine is present on tyrosine 142. The chain crosses the membrane as a helical span at residues 161–186 (IGYAICIIAFYIASYYNTIIAWALYY). Residues 187-252 (LISSFTDQLP…KGLQDLGTIS (66 aa)) lie on the Extracellular side of the membrane. Cysteine 200 and cysteine 209 are oxidised to a cystine. 2 N-linked (GlcNAc...) asparagine glycosylation sites follow: asparagine 208 and asparagine 217. Residues 253 to 271 (WQLALCIMLIFTIIYFSIW) form a helical membrane-spanning segment. Residues 272-277 (KGVKTS) lie on the Cytoplasmic side of the membrane. Threonine 276 bears the Phosphothreonine mark. A helical transmembrane segment spans residues 278 to 297 (GKVVWVTATFPYIVLSVLLV). Residues 298-324 (RGATLPGAWRGVVFYLKPNWQKLLETG) lie on the Extracellular side of the membrane. The helical transmembrane segment at 325–347 (VWVDAAAQIFFSLGPGFGVLLAF) threads the bilayer. Serine 336 is a Na(+) binding site. Over 348 to 360 (ASYNKFNNNCYQD) the chain is Cytoplasmic. A helical membrane pass occupies residues 361-380 (ALVTSVVNCMTSFVSGFVIF). Position 368 (asparagine 368) interacts with Na(+). Topologically, residues 381–421 (TVLGYMAEMRNEDVSEVAKDAGPSLLFITYAEAIANMPAST) are extracellular. A helical membrane pass occupies residues 422-443 (FFAIIFFLMLITLGLDSTFAGL). 3 residues coordinate Na(+): leucine 434, aspartate 437, and serine 438. Threonine 439 lines the serotonin pocket. At 444-463 (EGVITAVLDEFPHIWAKRRE) the chain is on the cytoplasmic side. Residues 464-483 (WFVLIVVITCILGSLLTLTS) traverse the membrane as a helical segment. Topologically, residues 484–494 (GGAYVVTLLEE) are extracellular. Serotonin contacts are provided by glutamate 494 and tyrosine 495. A helical membrane pass occupies residues 495 to 516 (YATGPAVLTVALIEAVVVSWFY). Topologically, residues 517–538 (GITQFCSDVKEMLGFSPGWFWR) are cytoplasmic. Residues 539–558 (ICWVAISPLFLLFIICSFLM) form a helical membrane-spanning segment. The serotonin site is built by phenylalanine 556 and serine 559. The Extracellular segment spans residues 559-574 (SPPQLRLFQYNYPHWS). The chain crosses the membrane as a helical span at residues 575–595 (IILGYCIGTSSVICIPIYIIY). At 596-630 (RLISTPGTLKERIIKSITPETPTEIPCGDIRMNAV) the chain is on the cytoplasmic side. Residues 616-624 (TPTEIPCGD) are interaction with RAB4A.

It belongs to the sodium:neurotransmitter symporter (SNF) (TC 2.A.22) family. SLC6A4 subfamily. As to quaternary structure, monomer or homooligomer. Interacts (via C-terminus) with SCAMP2; the interaction is direct and retains transporter molecules intracellularly. Interacts with filamentous actin and STX1A. Interacts (via the N-terminus) with STX1A (via the H3 domain); this interaction regulates SLC4A6 channel conductance. Interacts with SEC23A, SEC24C and PATJ. Interacts with NOS1; the interaction may diminish the cell surface localization of SERT in the brain and, correspondingly, reduce serotonin reuptake. Interacts with TGFB1I1. Interacts with ITGAV:ITGB3. Interacts (via C-terminus) with ITGB3; this interaction regulates SLC6A4 trafficking. In terms of processing, phosphorylation at Thr-276 increases 5-HT uptake and is required for cGMP-mediated SERT regulation. In terms of tissue distribution, expressed in the lung, midbrain and brainstem regions. Expressed in brainstem raphe neurons.

It localises to the cell membrane. The protein resides in the endomembrane system. The protein localises to the endosome membrane. It is found in the synapse. Its subcellular location is the cell junction. It localises to the focal adhesion. The protein resides in the cell projection. The protein localises to the neuron projection. It catalyses the reaction serotonin(out) + K(+)(in) + Na(+)(out) + H(+)(in) = serotonin(in) + K(+)(out) + Na(+)(in) + H(+)(out). Its function is as follows. Serotonin transporter that cotransports serotonin with one Na(+) ion in exchange for one K(+) ion and possibly one proton in an overall electroneutral transport cycle. Transports serotonin across the plasma membrane from the extracellular compartment to the cytosol thus limiting serotonin intercellular signaling. Essential for serotonin homeostasis in the central nervous system. In the developing somatosensory cortex, acts in glutamatergic neurons to control serotonin uptake and its trophic functions accounting for proper spatial organization of cortical neurons and elaboration of sensory circuits. In the mature cortex, acts primarily in brainstem raphe neurons to mediate serotonin uptake from the synaptic cleft back into the pre-synaptic terminal thus terminating serotonin signaling at the synapse. Modulates mucosal serotonin levels in the gastrointestinal tract through uptake and clearance of serotonin in enterocytes. Required for enteric neurogenesis and gastrointestinal reflexes. Regulates blood serotonin levels by ensuring rapid high affinity uptake of serotonin from plasma to platelets, where it is further stored in dense granules via vesicular monoamine transporters and then released upon stimulation. Mechanistically, the transport cycle starts with an outward-open conformation having Na1(+) and Cl(-) sites occupied. The binding of a second extracellular Na2(+) ion and serotonin substrate leads to structural changes to outward-occluded to inward-occluded to inward-open, where the Na2(+) ion and serotonin are released into the cytosol. Binding of intracellular K(+) ion induces conformational transitions to inward-occluded to outward-open and completes the cycle by releasing K(+) possibly together with a proton bound to Asp-98 into the extracellular compartment. Na1(+) and Cl(-) ions remain bound throughout the transport cycle. Additionally, displays serotonin-induced channel-like conductance for monovalent cations, mainly Na(+) ions. The channel activity is uncoupled from the transport cycle and may contribute to the membrane resting potential or excitability. The protein is Sodium-dependent serotonin transporter of Mus musculus (Mouse).